A 218-amino-acid chain; its full sequence is Envelope glycoprotein L (218 aa).

The tract at residues lysine 57–threonine 185 is interaction with gH. The 159-residue stretch at lysine 60–threonine 218 folds into the gL alphaherpesvirus-type domain. Cystine bridges form between cysteine 81–cysteine 113 and cysteine 183–cysteine 206.

It belongs to the herpesviridae glycoprotein L (gL) family. Alphaherpesvirinae gL subfamily. As to quaternary structure, interacts with glycoprotein H (gH); this interaction is necessary for the correct processing and cell surface expression of gH. The heterodimer gH/gL seems to interact with gB trimers during fusion.

It localises to the virion membrane. Its subcellular location is the host cell membrane. The protein resides in the host Golgi apparatus. It is found in the host trans-Golgi network. The heterodimer glycoprotein H-glycoprotein L is required for the fusion of viral and plasma membranes leading to virus entry into the host cell. Acts as a functional inhibitor of gH and maintains gH in an inhibited form. Upon binding to host integrins, gL dissociates from gH leading to activation of the viral fusion glycoproteins gB and gH. This Equus caballus (Horse) protein is Envelope glycoprotein L.